Reading from the N-terminus, the 360-residue chain is S-adenosylmethionine:tRNA ribosyltransferase-isomerase (360 aa).

It belongs to the QueA family. In terms of assembly, monomer.

The protein localises to the cytoplasm. The catalysed reaction is 7-aminomethyl-7-carbaguanosine(34) in tRNA + S-adenosyl-L-methionine = epoxyqueuosine(34) in tRNA + adenine + L-methionine + 2 H(+). Its pathway is tRNA modification; tRNA-queuosine biosynthesis. Transfers and isomerizes the ribose moiety from AdoMet to the 7-aminomethyl group of 7-deazaguanine (preQ1-tRNA) to give epoxyqueuosine (oQ-tRNA). The polypeptide is S-adenosylmethionine:tRNA ribosyltransferase-isomerase (Burkholderia mallei (strain NCTC 10247)).